Reading from the N-terminus, the 134-residue chain is Acyl carrier protein, mitochondrial (134 aa).

A mitochondrion-targeting transit peptide spans 1–46; it reads MFRTAALTAARVARPAVASAVRAGVARPAFVQAVPKVAAFQAVRFY. One can recognise a Carrier domain in the interval 55–131; that stretch reads DEVFSRIAQV…KAVEYILSQP (77 aa). Serine 91 is modified (O-(pantetheine 4'-phosphoryl)serine).

The protein belongs to the acyl carrier protein (ACP) family. In terms of assembly, complex I is composed of about 30 different subunits. 4'-phosphopantetheine is transferred from CoA to a specific serine of apo-ACP by acpS. This modification is essential for activity because fatty acids are bound in thioester linkage to the sulfhydryl of the prosthetic group.

Its subcellular location is the mitochondrion. It participates in lipid metabolism; fatty acid biosynthesis. Its function is as follows. Carrier of the growing fatty acid chain in fatty acid biosynthesis. May be involved in the synthesis of very-long-chain fatty acids. Accessory and non-catalytic subunit of the mitochondrial membrane respiratory chain NADH dehydrogenase (Complex I), which functions in the transfer of electrons from NADH to the respiratory chain. The sequence is that of Acyl carrier protein, mitochondrial (nuo-12) from Neurospora crassa (strain ATCC 24698 / 74-OR23-1A / CBS 708.71 / DSM 1257 / FGSC 987).